The sequence spans 246 residues: Acetoacetate decarboxylase (246 aa).

The Schiff-base intermediate with acetoacetate role is filled by lysine 116.

The protein belongs to the ADC family.

It carries out the reaction acetoacetate + H(+) = acetone + CO2. Functionally, catalyzes the conversion of acetoacetate to acetone and carbon dioxide. This Burkholderia cenocepacia (strain ATCC BAA-245 / DSM 16553 / LMG 16656 / NCTC 13227 / J2315 / CF5610) (Burkholderia cepacia (strain J2315)) protein is Acetoacetate decarboxylase.